Reading from the N-terminus, the 95-residue chain is uncharacterized protein (95 aa).

Position 21 (Lys21) interacts with phosphate. Residue Asp44 participates in Mg(2+) binding. Asn47 contacts phosphate.

Belongs to the HAD-like hydrolase superfamily. Cof family. It depends on Mg(2+) as a cofactor.

This is an uncharacterized protein from Geobacillus stearothermophilus (Bacillus stearothermophilus).